The primary structure comprises 765 residues: Eukaryotic translation initiation factor 3 subunit B (765 aa).

The sufficient for interaction with HCR1 and TIF32 stretch occupies residues 1 to 136 (MKNFLPRTLK…LFVECGSMND (136 aa)). The segment at 28-261 (RNTQLKRSKI…GVTAWGGPNF (234 aa)) is sufficient for interaction with PIC8. Position 61 is a phosphoserine (Ser61). Tyr67 is modified (phosphotyrosine). In terms of domain architecture, RRM spans 77–162 (QYIVVNGAPV…HRLFLYTMKD (86 aa)). Ser671 is modified (phosphoserine).

This sequence belongs to the eIF-3 subunit B family. As to quaternary structure, component of the eukaryotic translation initiation factor 3 (eIF-3) complex.

It is found in the cytoplasm. Functionally, RNA-binding component of the eukaryotic translation initiation factor 3 (eIF-3) complex, which is involved in protein synthesis of a specialized repertoire of mRNAs and, together with other initiation factors, stimulates binding of mRNA and methionyl-tRNAi to the 40S ribosome. The eIF-3 complex specifically targets and initiates translation of a subset of mRNAs involved in cell proliferation. The chain is Eukaryotic translation initiation factor 3 subunit B from Saccharomyces cerevisiae (strain YJM789) (Baker's yeast).